The chain runs to 860 residues: DDB1- and CUL4-associated factor 6 (860 aa).

WD repeat units follow at residues 49 to 88 (VHDG…VLTT), 92 to 133 (GHRA…ETNR), 139 to 179 (CHYG…SCTK), 189 to 229 (NCRR…TRAT), and 251 to 290 (NKSC…AREL). 2 stretches are compositionally biased toward basic and acidic residues: residues 288–303 (RELK…EELR) and 312–334 (LRGD…RDGE). 4 disordered regions span residues 288–340 (RELK…PNVS), 355–392 (EASE…SPDL), 407–490 (QFLQ…TTST), and 502–675 (IASS…GPGD). Serine 336 carries the post-translational modification Phosphoserine. Polar residues-rich tracts occupy residues 379-388 (DISTLPTVPS) and 409-421 (LQPS…SAQA). A compositionally biased stretch (low complexity) spans 422–441 (HSTSSPTESPHSTPLLSSPD). Basic and acidic residues predominate over residues 457–467 (HQSDNNNEKLS). Residues 480–490 (HYSTEGTTTST) are compositionally biased toward polar residues. A compositionally biased stretch (low complexity) spans 502-511 (IASSSRGIGS). Positions 535 to 549 (SETKAPEESSEDVTK) are enriched in basic and acidic residues. A compositionally biased stretch (low complexity) spans 614–626 (TSTESATNENNTN). Over residues 627-636 (PEPQFQTEAT) the composition is skewed to polar residues. Serine 649 bears the Phosphoserine mark. Threonine 654 carries the phosphothreonine modification. Position 657 is a phosphoserine (serine 657). The IQ domain occupies 676–705 (RRSAVARIQEFFRRRKERKEMEELDTLNIR). WD repeat units lie at residues 718-756 (NSRT…HLML) and 759-798 (ADNH…RIFN). 2 positions are modified to phosphoserine: serine 847 and serine 850.

Interacts with the nuclear receptors NR3C1 and AR in the presence of ligand. Interacts with DDB1, CUL4A and CUL4B. In terms of tissue distribution, highly expressed in skeletal muscle and testis. Expressed to a lesser degree in heart, prostate, and adrenal gland.

It is found in the nucleus. It functions in the pathway protein modification; protein ubiquitination. Its function is as follows. Ligand-dependent coactivator of nuclear receptors. Enhance transcriptional activity of the nuclear receptors NR3C1 and AR. May function as a substrate receptor for CUL4-DDB1 E3 ubiquitin-protein ligase complex. This is DDB1- and CUL4-associated factor 6 (DCAF6) from Homo sapiens (Human).